A 495-amino-acid polypeptide reads, in one-letter code: Probable aminotransferase ACS12 (495 aa).

Position 334 is an N6-(pyridoxal phosphate)lysine (K334).

The protein belongs to the class-I pyridoxal-phosphate-dependent aminotransferase family. As to quaternary structure, homodimer. Pyridoxal 5'-phosphate is required as a cofactor. Expressed in roots. Expressed at low level in leaves, stems, flowers and siliques.

Probable aminotransferase. Does not have 1-aminocyclopropane-1-carboxylate synthase (ACS) activity, suggesting that it is not involved in ethylene biosynthesis. In Arabidopsis thaliana (Mouse-ear cress), this protein is Probable aminotransferase ACS12 (ACS12).